The chain runs to 503 residues: MAIQIPSRQLFIDGEWREPVLKKRIPIINPATEQIIGDIPAATAEDVEIAVEAARKALARNKGRDWALAPGAVRAKYLRAIAAKIAERKSEIAKLEAIDCGKPLDEAAWDIDDVSGCFEYYADLAEGLDAQQKTPISLPMEQFKSHVLKEPIGVVGLITPWNYPLLMATWKVAPALAAGCAAILKPSELASVTCLELADVCREVGLPPGVLNILTGLGHEAGAPLASHPHVDKIAFTGSTMTGSKIMTAAAQLVKPVSLELGGKSPIVVFDDVDIDKAAEWTAFGIFWTNGQICSATSRLIIHENIAAKFLDRLVQWCKNIKIADPLEEGCRLGPVVSGGQYEKILKFIATAKSEGARVLSGGARPEHLKKGFFIEPTIITDVTTSMQIWREEVFGPVLCVKTFSSEDEALELANDSHYGLGAAVISKDLERCERVSKALQAGIVWINCSQPCFCQAPWGGNKRSGFGRELGKWGLDNYLTVKQVTEYVSDDPWGWYKSPSKL.

Na(+) contacts are provided by Ile-28, Asp-99, and Leu-189. Residue 238 to 245 coordinates NAD(+); that stretch reads GSTMTGSK. Glu-260 serves as the catalytic Proton acceptor. Residues Cys-294 and Glu-393 each contribute to the NAD(+) site. The active-site Nucleophile is Cys-294. Positions 501-503 match the Microbody targeting signal motif; it reads SKL.

Belongs to the aldehyde dehydrogenase family. In terms of tissue distribution, expressed in leaves, flowers and fruits.

It localises to the peroxisome. The catalysed reaction is 4-aminobutanal + NAD(+) + H2O = 4-aminobutanoate + NADH + 2 H(+). It carries out the reaction 3-aminopropanal + NAD(+) + H2O = beta-alanine + NADH + 2 H(+). It functions in the pathway amine and polyamine biosynthesis; betaine biosynthesis via choline pathway; betaine from betaine aldehyde: step 1/1. Dehydrogenase that catalyzes the oxidation of several aminoaldehydes. Metabolizes and detoxifies aldehyde products of polyamine degradation to non-toxic amino acids. Catalyzes the oxidation of 4-aminobutanal and 3-aminopropanal to 4-aminobutanoate and beta-alanine, respectively. In Malus domestica (Apple), this protein is Aminoaldehyde dehydrogenase 2, peroxisomal.